An 859-amino-acid polypeptide reads, in one-letter code: Envelope glycoprotein gp160 (859 aa).

The N-terminal stretch at Met-1 to Tyr-24 is a signal peptide. Residues Val-25–Tyr-673 are Extracellular-facing. N-linked (GlcNAc...) asparagine; by host glycosylation occurs at Asn-36. A disulfide bridge connects residues Cys-43 and Cys-56. N-linked (GlcNAc...) asparagine; by host glycans are attached at residues Asn-69, Asn-78, Asn-113, Asn-119, Asn-131, Asn-137, Asn-145, Asn-160, Asn-173, Asn-186, Asn-200, Asn-232, Asn-235, Asn-242, Asn-266, Asn-272, Asn-283, Asn-294, Asn-304, Asn-359, Asn-392, Asn-402, Asn-405, Asn-442, Asn-457, and Asn-460. Intrachain disulfides connect Cys-100/Cys-208, Cys-107/Cys-199, Cys-112/Cys-157, Cys-221/Cys-251, and Cys-231/Cys-243. Residues Cys-112–Asp-156 are V1. Residues Cys-157 to Cys-199 are V2. The V3 stretch occupies residues Cys-299 to Trp-331. Cysteines 299 and 332 form a disulfide. Cystine bridges form between Cys-384/Cys-441 and Cys-391/Cys-414. The tract at residues Cys-391 to Cys-414 is V4. A V5 region spans residues Asn-457 to Phe-463. The interval Gly-506–Ala-526 is fusion peptide. Residues Leu-569–Gln-585 are immunosuppression. N-linked (GlcNAc...) asparagine; by host glycosylation is found at Asn-605, Asn-614, and Asn-630. Residues Asn-614–Met-646 adopt a coiled-coil conformation. The segment at Lys-651–Gln-672 is MPER; binding to GalCer. A helical membrane pass occupies residues Gly-674–Leu-694. The Cytoplasmic segment spans residues Ser-695–Leu-859. A YXXV motif; contains endocytosis signal motif is present at residues Tyr-701–Val-704. Cys-767 is lipidated: S-palmitoyl cysteine; by host. Residues Leu-858–Leu-859 carry the Di-leucine internalization motif motif.

As to quaternary structure, the mature envelope protein (Env) consists of a homotrimer of non-covalently associated gp120-gp41 heterodimers. The resulting complex protrudes from the virus surface as a spike. There seems to be as few as 10 spikes on the average virion. Interacts with human CD4, CCR5 and CXCR4, to form a P4HB/PDI-CD4-CXCR4-gp120 complex. Gp120 also interacts with the C-type lectins CD209/DC-SIGN and CLEC4M/DC-SIGNR (collectively referred to as DC-SIGN(R)). Gp120 and gp41 interact with GalCer. In terms of assembly, the mature envelope protein (Env) consists of a homotrimer of non-covalently associated gp120-gp41 heterodimers. The resulting complex protrudes from the virus surface as a spike. There seems to be as few as 10 spikes on the average virion. In terms of processing, specific enzymatic cleavages in vivo yield mature proteins. Envelope glycoproteins are synthesized as an inactive precursor that is heavily N-glycosylated and processed likely by host cell furin in the Golgi to yield the mature SU and TM proteins. The cleavage site between SU and TM requires the minimal sequence [KR]-X-[KR]-R. Palmitoylation of the transmembrane protein and of Env polyprotein (prior to its proteolytic cleavage) is essential for their association with host cell membrane lipid rafts. Palmitoylation is therefore required for envelope trafficking to classical lipid rafts, but not for viral replication.

It localises to the virion membrane. It is found in the host cell membrane. The protein resides in the host endosome membrane. The surface protein gp120 (SU) attaches the virus to the host lymphoid cell by binding to the primary receptor CD4. This interaction induces a structural rearrangement creating a high affinity binding site for a chemokine coreceptor like CXCR4 and/or CCR5. This peculiar 2 stage receptor-interaction strategy allows gp120 to maintain the highly conserved coreceptor-binding site in a cryptic conformation, protected from neutralizing antibodies. Since CD4 also displays a binding site for the disulfide-isomerase P4HB/PDI, a P4HB/PDI-CD4-CXCR4-gp120 complex may form. In that complex, P4HB/PDI could reach and reduce gp120 disulfide bonds, causing major conformational changes in gp120. TXN, another PDI family member could also be involved in disulfide rearrangements in Env during fusion. These changes are transmitted to the transmembrane protein gp41 and are thought to activate its fusogenic potential by unmasking its fusion peptide. In terms of biological role, the surface protein gp120 is a ligand for CD209/DC-SIGN and CLEC4M/DC-SIGNR, which are respectively found on dendritic cells (DCs), and on endothelial cells of liver sinusoids and lymph node sinuses. These interactions allow capture of viral particles at mucosal surfaces by these cells and subsequent transmission to permissive cells. DCs are professional antigen presenting cells, critical for host immunity by inducing specific immune responses against a broad variety of pathogens. They act as sentinels in various tissues where they take up antigen, process it, and present it to T-cells following migration to lymphoid organs. HIV subverts the migration properties of dendritic cells to gain access to CD4+ T-cells in lymph nodes. Virus transmission to permissive T-cells occurs either in trans (without DCs infection, through viral capture and transmission), or in cis (following DCs productive infection, through the usual CD4-gp120 interaction), thereby inducing a robust infection. In trans infection, bound virions remain infectious over days and it is proposed that they are not degraded, but protected in non-lysosomal acidic organelles within the DCs close to the cell membrane thus contributing to the viral infectious potential during DCs' migration from the periphery to the lymphoid tissues. On arrival at lymphoid tissues, intact virions recycle back to DCs' cell surface allowing virus transmission to CD4+ T-cells. Virion capture also seems to lead to MHC-II-restricted viral antigen presentation, and probably to the activation of HIV-specific CD4+ cells. Functionally, the transmembrane protein gp41 (TM) acts as a class I viral fusion protein. Under the current model, the protein has at least 3 conformational states: pre-fusion native state, pre-hairpin intermediate state, and post-fusion hairpin state. During fusion of viral and target intracellular membranes, the coiled coil regions (heptad repeats) assume a trimer-of-hairpins structure, positioning the fusion peptide in close proximity to the C-terminal region of the ectodomain. The formation of this structure appears to drive apposition and subsequent fusion of viral and target cell membranes. Complete fusion occurs in host cell endosomes and is dynamin-dependent, however some lipid transfer might occur at the plasma membrane. The virus undergoes clathrin-dependent internalization long before endosomal fusion, thus minimizing the surface exposure of conserved viral epitopes during fusion and reducing the efficacy of inhibitors targeting these epitopes. Membranes fusion leads to delivery of the nucleocapsid into the cytoplasm. Its function is as follows. The envelope glycoprotein gp160 precursor down-modulates cell surface CD4 antigen by interacting with it in the endoplasmic reticulum and blocking its transport to the cell surface. The gp120-gp41 heterodimer seems to contribute to T-cell depletion during HIV-1 infection. The envelope glycoproteins expressed on the surface of infected cells induce apoptosis through an interaction with uninfected cells expressing the receptor (CD4) and the coreceptors CXCR4 or CCR5. This type of bystander killing may be obtained by at least three distinct mechanisms. First, the interaction between the 2 cells can induce cellular fusion followed by nuclear fusion within the syncytium. Syncytia are condemned to die from apoptosis. Second, the 2 interacting cells may not fuse entirely and simply exchange plasma membrane lipids, after a sort of hemifusion process, followed by rapid death. Third, it is possible that virus-infected cells, on the point of undergoing apoptosis, fuse with CD4-expressing cells, in which case apoptosis is rapidly transmitted from one cell to the other and thus occurs in a sort of contagious fashion. In terms of biological role, the gp120-gp41 heterodimer allows rapid transcytosis of the virus through CD4 negative cells such as simple epithelial monolayers of the intestinal, rectal and endocervical epithelial barriers. Both gp120 and gp41 specifically recognize glycosphingolipids galactosyl-ceramide (GalCer) or 3' sulfo-galactosyl-ceramide (GalS) present in the lipid rafts structures of epithelial cells. Binding to these alternative receptors allows the rapid transcytosis of the virus through the epithelial cells. This transcytotic vesicle-mediated transport of virions from the apical side to the basolateral side of the epithelial cells does not involve infection of the cells themselves. The sequence is that of Envelope glycoprotein gp160 (env) from Homo sapiens (Human).